We begin with the raw amino-acid sequence, 1340 residues long: Serine/threonine-protein phosphatase 7 long form homolog (1340 aa).

Residues Asp-660 and His-662 each contribute to the Mn(2+) site. The active-site Proton donor is the His-722. Mn(2+) is bound at residue His-773. Disordered stretches follow at residues 788 to 814 (QERN…DRSE), 1012 to 1093 (KSMD…SRTR), 1196 to 1218 (TDGA…SEDI), and 1266 to 1340 (FTNL…DMDS). Basic residues predominate over residues 790–799 (RNRKRKRTQK). A compositionally biased stretch (acidic residues) spans 1018–1027 (EQMEVDEKDD). Residues 1049 to 1080 (GDRDMVDFSDKTENGSKEADHSETAEISKDLS) are compositionally biased toward basic and acidic residues. Residues 1203-1213 (EPSTSKLNYSE) show a composition bias toward polar residues. 2 stretches are compositionally biased toward basic and acidic residues: residues 1266–1289 (FTNL…ERVI) and 1318–1328 (DSVDSKNKGSL).

Belongs to the PPP phosphatase family. PP-7 subfamily. Mn(2+) is required as a cofactor. In terms of tissue distribution, expressed in root tips, the shoot apical meristem (SAM), leaf vasculature, hydathodes and mature flowers.

It localises to the nucleus. The catalysed reaction is O-phospho-L-seryl-[protein] + H2O = L-seryl-[protein] + phosphate. It catalyses the reaction O-phospho-L-threonyl-[protein] + H2O = L-threonyl-[protein] + phosphate. Maybe required to maintain cell division activity in meristematic cells. The protein is Serine/threonine-protein phosphatase 7 long form homolog of Arabidopsis thaliana (Mouse-ear cress).